A 199-amino-acid chain; its full sequence is Elongation factor Ts, chloroplastic (199 aa).

Belongs to the EF-Ts family.

Its subcellular location is the plastid. The protein localises to the chloroplast. Associates with the EF-Tu.GDP complex and induces the exchange of GDP to GTP. It remains bound to the aminoacyl-tRNA.EF-Tu.GTP complex up to the GTP hydrolysis stage on the ribosome. The sequence is that of Elongation factor Ts, chloroplastic (tsf) from Galdieria sulphuraria (Red alga).